The following is a 496-amino-acid chain: Glutamyl-tRNA(Gln) amidotransferase subunit A, mitochondrial (496 aa).

Active-site charge relay system residues include Lys-80 and Ser-161. Ser-185 serves as the catalytic Acyl-ester intermediate.

Belongs to the amidase family. GatA subfamily. Subunit of the heterotrimeric GatCAB amidotransferase (AdT) complex, composed of A, B and C subunits.

The protein resides in the mitochondrion. It catalyses the reaction L-glutamyl-tRNA(Gln) + L-glutamine + ATP + H2O = L-glutaminyl-tRNA(Gln) + L-glutamate + ADP + phosphate + H(+). Allows the formation of correctly charged Gln-tRNA(Gln) through the transamidation of misacylated Glu-tRNA(Gln) in the mitochondria. The reaction takes place in the presence of glutamine and ATP through an activated gamma-phospho-Glu-tRNA(Gln). The protein is Glutamyl-tRNA(Gln) amidotransferase subunit A, mitochondrial of Culex quinquefasciatus (Southern house mosquito).